The chain runs to 138 residues: Sec-independent protein translocase protein TatB (138 aa).

Residues 1 to 21 (MFDIGATELLVIAIVAILVIG) traverse the membrane as a helical segment. Positions 74–138 (MAKHPADQMQ…EPRLPLEGRD (65 aa)) are disordered. The segment covering 83–97 (QPLDAPDPALSAAEA) has biased composition (low complexity). Over residues 98–138 (RAAHTEAAKPARAAEETQADRASADEHPAASEPRLPLEGRD) the composition is skewed to basic and acidic residues.

It belongs to the TatB family. As to quaternary structure, the Tat system comprises two distinct complexes: a TatABC complex, containing multiple copies of TatA, TatB and TatC subunits, and a separate TatA complex, containing only TatA subunits. Substrates initially bind to the TatABC complex, which probably triggers association of the separate TatA complex to form the active translocon.

The protein resides in the cell inner membrane. Part of the twin-arginine translocation (Tat) system that transports large folded proteins containing a characteristic twin-arginine motif in their signal peptide across membranes. Together with TatC, TatB is part of a receptor directly interacting with Tat signal peptides. TatB may form an oligomeric binding site that transiently accommodates folded Tat precursor proteins before their translocation. This Erythrobacter litoralis (strain HTCC2594) protein is Sec-independent protein translocase protein TatB.